A 365-amino-acid polypeptide reads, in one-letter code: Protein-glutamate methylesterase/protein-glutamine glutaminase 2 (365 aa).

Positions 18 to 135 constitute a Response regulatory domain; sequence RVLIVDDSAM…GQGLPAIMRD (118 aa). Asp-69 is modified (4-aspartylphosphate). The 194-residue stretch at 162 to 355 folds into the CheB-type methylesterase domain; the sequence is GASEDWIHAL…ARMMLAAAAD (194 aa). Catalysis depends on residues Ser-174, His-200, and Asp-297.

The protein belongs to the CheB family. In terms of processing, phosphorylated by CheA. Phosphorylation of the N-terminal regulatory domain activates the methylesterase activity.

It localises to the cytoplasm. It catalyses the reaction [protein]-L-glutamate 5-O-methyl ester + H2O = L-glutamyl-[protein] + methanol + H(+). The catalysed reaction is L-glutaminyl-[protein] + H2O = L-glutamyl-[protein] + NH4(+). In terms of biological role, involved in chemotaxis. Part of a chemotaxis signal transduction system that modulates chemotaxis in response to various stimuli. Catalyzes the demethylation of specific methylglutamate residues introduced into the chemoreceptors (methyl-accepting chemotaxis proteins or MCP) by CheR. Also mediates the irreversible deamidation of specific glutamine residues to glutamic acid. The protein is Protein-glutamate methylesterase/protein-glutamine glutaminase 2 of Cereibacter sphaeroides (strain ATCC 17023 / DSM 158 / JCM 6121 / CCUG 31486 / LMG 2827 / NBRC 12203 / NCIMB 8253 / ATH 2.4.1.) (Rhodobacter sphaeroides).